We begin with the raw amino-acid sequence, 120 residues long: Large ribosomal subunit protein bL12 (120 aa).

This sequence belongs to the bacterial ribosomal protein bL12 family. In terms of assembly, homodimer. Part of the ribosomal stalk of the 50S ribosomal subunit. Forms a multimeric L10(L12)X complex, where L10 forms an elongated spine to which 2 to 4 L12 dimers bind in a sequential fashion. Binds GTP-bound translation factors.

Its function is as follows. Forms part of the ribosomal stalk which helps the ribosome interact with GTP-bound translation factors. Is thus essential for accurate translation. This is Large ribosomal subunit protein bL12 from Listeria monocytogenes serotype 4b (strain CLIP80459).